The primary structure comprises 1182 residues: Rho GTPase-activating protein 20 (1182 aa).

The interval 1–40 (MEAMSPQQDALGAQPGRSSSLTGMSRIAGGPGTKKKMKTL) is disordered. Ser-46 carries the post-translational modification Phosphoserine. Residues 86–187 (LLIDGPVELK…SLLQRYIALE (102 aa)) enclose the PH domain. The 90-residue stretch at 194–283 (KSIPLKIFAK…TALLTQGSKD (90 aa)) folds into the Ras-associating domain. The Rho-GAP domain maps to 365-551 (VSLPDICEND…FLIENCCRIF (187 aa)). Ser-704 and Ser-730 each carry phosphoserine. 4 disordered regions span residues 744-791 (KQTQ…IQET), 932-953 (ASYS…SSQD), 981-1009 (QRKQ…GQAS), and 1140-1182 (EESG…GDRH). Over residues 757–775 (FKQSSVTGTDVSKRNTANE) the composition is skewed to polar residues. A compositionally biased stretch (low complexity) spans 933–953 (SYSSLSSPGTSPSGSSVSSQD).

Highest expression is found in testis. Ubiquitously expressed in extragonadal tissues.

Its function is as follows. GTPase activator for the Rho-type GTPases by converting them to an inactive GDP-bound state. This chain is Rho GTPase-activating protein 20 (Arhgap20), found in Rattus norvegicus (Rat).